The sequence spans 289 residues: Protoheme IX farnesyltransferase (289 aa).

9 helical membrane passes run 9–29 (VALM…PVMM), 35–55 (MPSL…AGSA), 89–109 (LTFG…LVNW), 110–130 (PSAL…TLGL), 138–158 (IVIG…AVTG), 164–184 (AVLL…ALAM), 188–208 (DDYA…EVVT), 228–248 (VAHT…WFLA), and 269–289 (FHMS…TAVV).

Belongs to the UbiA prenyltransferase family. Protoheme IX farnesyltransferase subfamily.

It localises to the cell membrane. It catalyses the reaction heme b + (2E,6E)-farnesyl diphosphate + H2O = Fe(II)-heme o + diphosphate. The protein operates within porphyrin-containing compound metabolism; heme O biosynthesis; heme O from protoheme: step 1/1. Its function is as follows. Converts heme B (protoheme IX) to heme O by substitution of the vinyl group on carbon 2 of heme B porphyrin ring with a hydroxyethyl farnesyl side group. The chain is Protoheme IX farnesyltransferase from Frankia alni (strain DSM 45986 / CECT 9034 / ACN14a).